The primary structure comprises 258 residues: MKTPNAQEAEGQQTRAAAGRATGSANMTKKKVSQKKQRGRPSSQPRRNIVGCRISHGWKEGDEPITQWKGTVLDQVPINPSLYLVKYDGIDCVYGLELHRDERVLSLKILSDRVASSHISDANLANTIIGKAVEHMFEGEHGSKDEWRGMVLAQAPIMKAWFYITYEKDPVLYMYQLLDDYKEGDLRIMPESSESPPTEREPGGVVDGLIGKHVEYTKEDGSKRIGMVIHQVEAKPSVYFIKFDDDFHIYVYDLVKKS.

Positions 1–23 are enriched in low complexity; that stretch reads MKTPNAQEAEGQQTRAAAGRATG. Residues 1-49 form a disordered region; the sequence is MKTPNAQEAEGQQTRAAAGRATGSANMTKKKVSQKKQRGRPSSQPRRNI. The span at 28 to 39 shows a compositional bias: basic residues; that stretch reads TKKKVSQKKQRG. Tudor-like domain stretches follow at residues 50-99, 129-178, and 210-255; these read VGCR…LELH, IGKA…YQLL, and IGKH…YDLV. Histone H3K4me3 and H3R8me2a binding regions lie at residues E138 and 246-248; that span reads DFH.

Belongs to the SPIN/STSY family. In terms of assembly, interacts with C11orf84/SPINDOC. In terms of tissue distribution, detected in all the examined tissues with highest expression in liver, followed by heart, stomach, kidney, skeletal muscle, placenta, and pancreas.

It is found in the nucleus. Involved in the regulation of cell cycle progression, this activity is related to the inhibition of apoptosis following the removal of essential growth factors. Exhibits H3K4me3-binding activity. The chain is Spindlin-2B (SPIN2B) from Homo sapiens (Human).